Consider the following 391-residue polypeptide: Elongation factor Tu (391 aa).

Positions Lys10 to Ala201 constitute a tr-type G domain. The segment at Gly19 to Thr26 is G1. Gly19–Thr26 contributes to the GTP binding site. Thr26 is a binding site for Mg(2+). The G2 stretch occupies residues Gly55–Ser59. The G3 stretch occupies residues Asp76 to Gly79. GTP is bound by residues Asp76–His80 and Asn131–Asp134. The segment at Asn131–Asp134 is G4. Positions Ser169–Leu171 are G5.

It belongs to the TRAFAC class translation factor GTPase superfamily. Classic translation factor GTPase family. EF-Tu/EF-1A subfamily. As to quaternary structure, monomer.

It is found in the cytoplasm. The enzyme catalyses GTP + H2O = GDP + phosphate + H(+). GTP hydrolase that promotes the GTP-dependent binding of aminoacyl-tRNA to the A-site of ribosomes during protein biosynthesis. The chain is Elongation factor Tu from Cereibacter sphaeroides (strain ATCC 17029 / ATH 2.4.9) (Rhodobacter sphaeroides).